A 481-amino-acid chain; its full sequence is PRAME family member 22 (481 aa).

The stretch at 99 to 126 (RWKLQVLELRDVDENFWTIWSGARPLSC) is one LRR 1; degenerate repeat. Residues 181–205 (HLCCTKVVNYSMSILNFRNILETVY) form an LRR 2; degenerate repeat. One copy of the LRR 3; degenerate repeat lies at 206–232 (PDSIQVLEIWNMCWPCMIVEFSRYLSQ). An LRR 4; degenerate repeat occupies 233-267 (MRNLRKLFISDGCRYLLSSDSQEQLVAEFSSVLLR). LRR repeat units lie at residues 268–293 (LEYLQMLYVRRVCFFRGHLDQLIRCL), 294–325 (RSPLETLALTYGFLEKVDLKCLPRYPSLSQLK), 326–344 (QLNLSHGALRFIRLEPLRA), 350–377 (AATLQTLFLVDCGIRDSKLRVILPALSC), and 378–402 (CSNLTTFCFHGNDTSMDGLKDLLRH).

The protein belongs to the PRAME family.

This chain is PRAME family member 22, found in Homo sapiens (Human).